The sequence spans 196 residues: Probable malonic semialdehyde reductase RutE (196 aa).

It belongs to the nitroreductase family. HadB/RutE subfamily. It depends on FMN as a cofactor.

It catalyses the reaction 3-hydroxypropanoate + NADP(+) = 3-oxopropanoate + NADPH + H(+). In terms of biological role, may reduce toxic product malonic semialdehyde to 3-hydroxypropionic acid, which is excreted. This is Probable malonic semialdehyde reductase RutE from Klebsiella pneumoniae (strain 342).